The chain runs to 515 residues: FADH(2)-dependent monooxygenase TftD (515 aa).

A substrate-binding site is contributed by 100 to 104 (RLPDA). Residues 151–153 (LNF), 157–160 (QTDR), and Thr192 contribute to the FAD site. Position 203 to 204 (203 to 204 (GC)) interacts with substrate. 457–460 (TMTR) lines the FAD pocket.

This sequence belongs to the FADH(2)-utilizing monooxygenase family. In terms of assembly, homotetramer. The chlorophenol-4-monooxygenase is composed of an oxygenase component TftD and a reductase component TftC.

The protein operates within xenobiotic degradation. Functionally, oxygenase component of a two-component system that degrades 2,4,5-trichlorophenol. Uses FADH(2) supplied by TftC to oxidize 2,4,5-trichlorophenol (2,4,5-TCP) to 2,5-dichloro-p-benzoquinone, which is chemically reduced to 2,5-dichloro-p-hydroquinone (2,5-DiCHQ). Then, TftD oxidizes the latter to 5-chloro-2-hydroxy-p-benzoquinone. The polypeptide is FADH(2)-dependent monooxygenase TftD (tftD) (Burkholderia cepacia (Pseudomonas cepacia)).